The sequence spans 343 residues: Probable dual-specificity RNA methyltransferase RlmN (343 aa).

E91 (proton acceptor) is an active-site residue. The Radical SAM core domain maps to 97–326 (HPDRITACIS…AEIRREKGAD (230 aa)). C104 and C331 are disulfide-bonded. Positions 111, 115, and 118 each coordinate [4Fe-4S] cluster. S-adenosyl-L-methionine contacts are provided by residues 158–159 (GE), S190, 213–215 (SLH), and N289. The active-site S-methylcysteine intermediate is the C331.

It belongs to the radical SAM superfamily. RlmN family. The cofactor is [4Fe-4S] cluster.

The protein localises to the cytoplasm. It catalyses the reaction adenosine(2503) in 23S rRNA + 2 reduced [2Fe-2S]-[ferredoxin] + 2 S-adenosyl-L-methionine = 2-methyladenosine(2503) in 23S rRNA + 5'-deoxyadenosine + L-methionine + 2 oxidized [2Fe-2S]-[ferredoxin] + S-adenosyl-L-homocysteine. The enzyme catalyses adenosine(37) in tRNA + 2 reduced [2Fe-2S]-[ferredoxin] + 2 S-adenosyl-L-methionine = 2-methyladenosine(37) in tRNA + 5'-deoxyadenosine + L-methionine + 2 oxidized [2Fe-2S]-[ferredoxin] + S-adenosyl-L-homocysteine. Its function is as follows. Specifically methylates position 2 of adenine 2503 in 23S rRNA and position 2 of adenine 37 in tRNAs. The polypeptide is Probable dual-specificity RNA methyltransferase RlmN (Thermotoga petrophila (strain ATCC BAA-488 / DSM 13995 / JCM 10881 / RKU-1)).